We begin with the raw amino-acid sequence, 564 residues long: Proline--tRNA ligase (564 aa).

The protein belongs to the class-II aminoacyl-tRNA synthetase family. ProS type 1 subfamily. As to quaternary structure, homodimer.

It localises to the cytoplasm. It catalyses the reaction tRNA(Pro) + L-proline + ATP = L-prolyl-tRNA(Pro) + AMP + diphosphate. Functionally, catalyzes the attachment of proline to tRNA(Pro) in a two-step reaction: proline is first activated by ATP to form Pro-AMP and then transferred to the acceptor end of tRNA(Pro). As ProRS can inadvertently accommodate and process non-cognate amino acids such as alanine and cysteine, to avoid such errors it has two additional distinct editing activities against alanine. One activity is designated as 'pretransfer' editing and involves the tRNA(Pro)-independent hydrolysis of activated Ala-AMP. The other activity is designated 'posttransfer' editing and involves deacylation of mischarged Ala-tRNA(Pro). The misacylated Cys-tRNA(Pro) is not edited by ProRS. The chain is Proline--tRNA ligase from Xylella fastidiosa (strain Temecula1 / ATCC 700964).